We begin with the raw amino-acid sequence, 325 residues long: MSLQSRLSGRLAQLRAAGQLLVPPRPRPGHLAGATRTRSSTCGPPAFLGVFGRRARTSAGVGAWGAAAVGRTAGVRTWAPLAMAAKVDLSTSTDWKEAKSFLKGLSDKQREEHYFCKDFVRLKKIPTWKEMAKGVAVKVEEPRYKKDKQLNEKISLLRSDITKLEVDAIVNAANSSLLGGGGVDGCIHRAAGPLLTDECRTLQSCKTGKAKITGGYRLPAKYVIHTVGPIAYGEPSASQAAELRSCYLSSLDLLLEHRLRSVAFPCISTGVFGYPCEAAAEIVLATLREWLEQHKDKVDRLIICVFLEKDEDIYRSRLPHYFPVA.

N6-succinyllysine is present on residues lysine 96, lysine 103, and lysine 129. Lysine 138 participates in a covalent cross-link: Glycyl lysine isopeptide (Lys-Gly) (interchain with G-Cter in SUMO2). A Macro domain is found at 141–322 (EPRYKKDKQL…IYRSRLPHYF (182 aa)). 159–161 (SDI) contacts substrate. Lysine 163 carries the post-translational modification N6-acetyllysine. Residues 172-174 (AAN), 179-184 (GGGGVD), 267-273 (ISTGVFG), and phenylalanine 306 contribute to the substrate site.

This sequence belongs to the MacroD-type family. MacroD1/2-like subfamily. Interacts with ESR1; Interacts in a manner that is estrogen independent but is enhanced by estrogen. Interacts (via macro domain) with AR.

The protein resides in the nucleus. It carries out the reaction 3''-O-acetyl-ADP-D-ribose + H2O = ADP-D-ribose + acetate + H(+). The enzyme catalyses 2''-O-acetyl-ADP-D-ribose + H2O = ADP-D-ribose + acetate + H(+). It catalyses the reaction 4-O-(ADP-D-ribosyl)-L-aspartyl-[protein] + H2O = L-aspartyl-[protein] + ADP-D-ribose + H(+). The catalysed reaction is 5-O-(ADP-D-ribosyl)-L-glutamyl-[protein] + H2O = L-glutamyl-[protein] + ADP-D-ribose + H(+). It carries out the reaction alpha-NAD(+) + H2O = ADP-D-ribose + nicotinamide + H(+). With respect to regulation, subject to competitive inhibition by the product ADP-ribose. Functionally, removes ADP-ribose from aspartate and glutamate residues in proteins bearing a single ADP-ribose moiety. Inactive towards proteins bearing poly-ADP-ribose. Deacetylates O-acetyl-ADP ribose, a signaling molecule generated by the deacetylation of acetylated lysine residues in histones and other proteins. Plays a role in estrogen signaling. Binds to androgen receptor (AR) and amplifies the transactivation function of AR in response to androgen. May play an important role in carcinogenesis and/or progression of hormone-dependent cancers by feed-forward mechanism that activates ESR1 transactivation. Could be an ESR1 coactivator, providing a positive feedback regulatory loop for ESR1 signal transduction. Could be involved in invasive growth by down-regulating CDH1 in endometrial cancer cells. Enhances ESR1-mediated transcription activity. This is ADP-ribose glycohydrolase MACROD1 from Homo sapiens (Human).